Consider the following 184-residue polypeptide: ATP synthase subunit b, chloroplastic (184 aa).

Residues 27–49 (LATNPINLSVVLGVLIFFGKGVL) traverse the membrane as a helical segment.

This sequence belongs to the ATPase B chain family. As to quaternary structure, F-type ATPases have 2 components, F(1) - the catalytic core - and F(0) - the membrane proton channel. F(1) has five subunits: alpha(3), beta(3), gamma(1), delta(1), epsilon(1). F(0) has four main subunits: a(1), b(1), b'(1) and c(10-14). The alpha and beta chains form an alternating ring which encloses part of the gamma chain. F(1) is attached to F(0) by a central stalk formed by the gamma and epsilon chains, while a peripheral stalk is formed by the delta, b and b' chains.

It is found in the plastid. The protein resides in the chloroplast thylakoid membrane. Its function is as follows. F(1)F(0) ATP synthase produces ATP from ADP in the presence of a proton or sodium gradient. F-type ATPases consist of two structural domains, F(1) containing the extramembraneous catalytic core and F(0) containing the membrane proton channel, linked together by a central stalk and a peripheral stalk. During catalysis, ATP synthesis in the catalytic domain of F(1) is coupled via a rotary mechanism of the central stalk subunits to proton translocation. In terms of biological role, component of the F(0) channel, it forms part of the peripheral stalk, linking F(1) to F(0). The polypeptide is ATP synthase subunit b, chloroplastic (Carica papaya (Papaya)).